The chain runs to 624 residues: MQEKPTTVAAYAAGASLAAVALFYVFGPNYTIDGDEAGGNRKKSIVGLSNPANDCFINSVLQALAGLGDLRLYLIRELHRRELDGPEIYNQLPGPEEADQLREKRPDRIRELQQGTITRALKEMLDRLNERPIYKKTISARAFIQALEFAYRTRISRNQQDAQEFLQIVAERLSDEYHAGVKARQRAEKSIEFNPYQEREEAPSEIEVRLDDGTENGLPAIIDTKLKEIDNEYGFPFEGKLESQIECQFCHYKYKPNQTSFVNLTLQVPQRSSTTLNACFDGLLKTEYIDDFRCDKCRLLHAIEVKSNALVKAGSATDRQRLEAEIEKIQLALSSDPENALDGVTLPPAELAPKRRIARHMRITVFPKIIAIHLSRSMFDRSGSTKNAAKVAFPERLPLGGILSQKWFKLLAIVCHKGSHNSGHYESFRRNHLYPPYSTPSVFSSYAQSRAASENPSRVASPRLPASSSSTEPPALNISPPASTSTNSPLSLTPDSPSRPPSATDLKSPRPTTSSSRVSFQSTHSSSKQTISPTSAARNSSSLDTARLSSPASRSSLAERNASATDTEASASASLASRIRRRRKTADRWWRISDEKIKECKTSDVLGMQKEVYLLFYEIEKSGS.

Positions 46 to 620 (VGLSNPANDC…EVYLLFYEIE (575 aa)) constitute a USP domain. Catalysis depends on cysteine 55, which acts as the Nucleophile. The active-site Proton acceptor is the histidine 424. The interval 453-573 (SENPSRVASP…ATDTEASASA (121 aa)) is disordered. The segment covering 479 to 496 (SPPASTSTNSPLSLTPDS) has biased composition (low complexity). Positions 518–544 (VSFQSTHSSSKQTISPTSAARNSSSLD) are enriched in polar residues. Positions 546–573 (ARLSSPASRSSLAERNASATDTEASASA) are enriched in low complexity.

Belongs to the peptidase C19 family.

The enzyme catalyses Thiol-dependent hydrolysis of ester, thioester, amide, peptide and isopeptide bonds formed by the C-terminal Gly of ubiquitin (a 76-residue protein attached to proteins as an intracellular targeting signal).. This is Ubiquitin carboxyl-terminal hydrolase 16 (ubp16) from Emericella nidulans (strain FGSC A4 / ATCC 38163 / CBS 112.46 / NRRL 194 / M139) (Aspergillus nidulans).